Reading from the N-terminus, the 698-residue chain is Elongation factor G 2 (698 aa).

Residues 8–290 (ERYRNIGIMA…AVVDYLPSPV (283 aa)) enclose the tr-type G domain. Residues 17–24 (AHIDAGKT), 88–92 (DTPGH), and 142–145 (NKMD) each bind GTP.

Belongs to the TRAFAC class translation factor GTPase superfamily. Classic translation factor GTPase family. EF-G/EF-2 subfamily.

Its subcellular location is the cytoplasm. Functionally, catalyzes the GTP-dependent ribosomal translocation step during translation elongation. During this step, the ribosome changes from the pre-translocational (PRE) to the post-translocational (POST) state as the newly formed A-site-bound peptidyl-tRNA and P-site-bound deacylated tRNA move to the P and E sites, respectively. Catalyzes the coordinated movement of the two tRNA molecules, the mRNA and conformational changes in the ribosome. The protein is Elongation factor G 2 of Methylococcus capsulatus (strain ATCC 33009 / NCIMB 11132 / Bath).